The primary structure comprises 533 residues: Retinoid isomerohydrolase (533 aa).

S2 carries the post-translational modification N-acetylserine. A phosphothreonine mark is found at T101 and T105. C112 carries S-palmitoyl cysteine; in membrane form lipidation. N6-acetyllysine is present on K113. A Phosphoserine modification is found at S117. H180 contributes to the Fe cation binding site. C231 carries S-palmitoyl cysteine; in membrane form lipidation. The Fe cation site is built by H241 and H313. Residues C329 and C330 are each lipidated (S-palmitoyl cysteine; in membrane form). H527 lines the Fe cation pocket.

This sequence belongs to the carotenoid oxygenase family. As to quaternary structure, interacts with MYO7A; this mediates light-dependent intracellular transport of RPE65. It depends on Fe(2+) as a cofactor. Post-translationally, palmitoylation by LRAT regulates ligand binding specificity; the palmitoylated form (membrane form) specifically binds all-trans-retinyl-palmitate, while the soluble unpalmitoylated form binds all-trans-retinol (vitamin A). In terms of tissue distribution, retinal pigment epithelium specific.

The protein localises to the cytoplasm. The protein resides in the cell membrane. Its subcellular location is the microsome membrane. The enzyme catalyses an all-trans-retinyl ester + H2O = 11-cis-retinol + a fatty acid + H(+). It carries out the reaction lutein = (3R,3'S)-zeaxanthin. It catalyses the reaction all-trans-retinyl hexadecanoate + H2O = 11-cis-retinol + hexadecanoate + H(+). Its function is as follows. Critical isomerohydrolase in the retinoid cycle involved in regeneration of 11-cis-retinal, the chromophore of rod and cone opsins. Catalyzes the cleavage and isomerization of all-trans-retinyl fatty acid esters to 11-cis-retinol which is further oxidized by 11-cis retinol dehydrogenase to 11-cis-retinal for use as visual chromophore. Essential for the production of 11-cis retinal for both rod and cone photoreceptors. Also capable of catalyzing the isomerization of lutein to meso-zeaxanthin an eye-specific carotenoid. The soluble form binds vitamin A (all-trans-retinol), making it available for LRAT processing to all-trans-retinyl ester. The membrane form, palmitoylated by LRAT, binds all-trans-retinyl esters, making them available for IMH (isomerohydrolase) processing to all-cis-retinol. The soluble form is regenerated by transferring its palmitoyl groups onto 11-cis-retinol, a reaction catalyzed by LRAT. The sequence is that of Retinoid isomerohydrolase (RPE65) from Canis lupus familiaris (Dog).